The primary structure comprises 85 residues: Cell division protein ZapA (85 aa).

Positions 59-85 (TAVNVVHDYMKLQEKYEILERQLKEKE) form a coiled coil.

The protein belongs to the ZapA family. Type 2 subfamily. In terms of assembly, homodimer. Interacts with FtsZ.

It localises to the cytoplasm. Activator of cell division through the inhibition of FtsZ GTPase activity, therefore promoting FtsZ assembly into bundles of protofilaments necessary for the formation of the division Z ring. It is recruited early at mid-cell but it is not essential for cell division. In Bacillus velezensis (strain DSM 23117 / BGSC 10A6 / LMG 26770 / FZB42) (Bacillus amyloliquefaciens subsp. plantarum), this protein is Cell division protein ZapA.